The primary structure comprises 367 residues: Isocitrate dehydrogenase [NAD] regulatory subunit 2, mitochondrial (367 aa).

Residues 1 to 25 (MSRQSFSLLKNLRSIASGSKIQTRS) constitute a mitochondrion transit peptide.

This sequence belongs to the isocitrate and isopropylmalate dehydrogenases family. In terms of assembly, heterooligomer of catalytic and regulatory subunits. Ubiquitous. Predominantly expressed in roots, stems and leaves.

It is found in the mitochondrion. Performs an essential role in the oxidative function of the citric acid cycle. The chain is Isocitrate dehydrogenase [NAD] regulatory subunit 2, mitochondrial (IDH2) from Arabidopsis thaliana (Mouse-ear cress).